The primary structure comprises 194 residues: Phosphoheptose isomerase (194 aa).

The region spanning 37-194 (IAKSFKNKNK…IIEKEMKKIN (158 aa)) is the SIS domain. Substrate is bound at residue 52–54 (NGG). Zn(2+)-binding residues include H61 and E65. Substrate is bound by residues E65, 93–94 (ND), 119–121 (STS), S124, and Q172. Positions 172 and 180 each coordinate Zn(2+).

It belongs to the SIS family. GmhA subfamily. In terms of assembly, homotetramer. Zn(2+) serves as cofactor.

The protein resides in the cytoplasm. The enzyme catalyses 2 D-sedoheptulose 7-phosphate = D-glycero-alpha-D-manno-heptose 7-phosphate + D-glycero-beta-D-manno-heptose 7-phosphate. It participates in carbohydrate biosynthesis; D-glycero-D-manno-heptose 7-phosphate biosynthesis; D-glycero-alpha-D-manno-heptose 7-phosphate and D-glycero-beta-D-manno-heptose 7-phosphate from sedoheptulose 7-phosphate: step 1/1. Catalyzes the isomerization of sedoheptulose 7-phosphate in D-glycero-D-manno-heptose 7-phosphate. This is Phosphoheptose isomerase from Buchnera aphidicola subsp. Schizaphis graminum (strain Sg).